A 211-amino-acid chain; its full sequence is Large ribosomal subunit protein bL25 (211 aa).

The protein belongs to the bacterial ribosomal protein bL25 family. CTC subfamily. As to quaternary structure, part of the 50S ribosomal subunit; part of the 5S rRNA/L5/L18/L25 subcomplex. Contacts the 5S rRNA. Binds to the 5S rRNA independently of L5 and L18.

Functionally, this is one of the proteins that binds to the 5S RNA in the ribosome where it forms part of the central protuberance. The polypeptide is Large ribosomal subunit protein bL25 (Anaplasma phagocytophilum (strain HZ)).